A 177-amino-acid polypeptide reads, in one-letter code: NADH-quinone oxidoreductase subunit B (177 aa).

4 residues coordinate [4Fe-4S] cluster: Cys56, Cys57, Cys121, and Cys151.

It belongs to the complex I 20 kDa subunit family. NDH-1 is composed of 14 different subunits. Subunits NuoB, C, D, E, F, and G constitute the peripheral sector of the complex. [4Fe-4S] cluster is required as a cofactor.

It localises to the cell inner membrane. The catalysed reaction is a quinone + NADH + 5 H(+)(in) = a quinol + NAD(+) + 4 H(+)(out). Functionally, NDH-1 shuttles electrons from NADH, via FMN and iron-sulfur (Fe-S) centers, to quinones in the respiratory chain. Couples the redox reaction to proton translocation (for every two electrons transferred, four hydrogen ions are translocated across the cytoplasmic membrane), and thus conserves the redox energy in a proton gradient. The sequence is that of NADH-quinone oxidoreductase subunit B from Ruegeria pomeroyi (strain ATCC 700808 / DSM 15171 / DSS-3) (Silicibacter pomeroyi).